The chain runs to 443 residues: MSDMEDDFMCDDEEDYDLEYSEDSNSEPNVDLENQYYNSKALKEDDPKAALSSFQKVLELEGEKGEWGFKALKQMIKINFKLTNFPEMMNRYKQLLTYIRSAVTRNYSEKSINSILDYISTSKQMDLLQEFYETTLEALKDAKNDRLWFKTNTKLGKLYLEREEFGKLQKILRQLHQSCQTDDGEDDLKKGTQLLEIYALEIQMYTAQKNNKKLKALYEQSLHIKSAIPHPLIMGVIRECGGKMHLREGEFEKAHTDFFEAFKNYDESGSPRRTTCLKYLVLANMLMKSGINPFDSQEAKPYKNDPEILAMTNLVSAYQNNDITEFEKILKTNHSNIMDDPFIREHIEELLRNIRTQVLIKLIKPYTRIHIPFISKELNIDVADVESLLVQCILDNTINGRIDQVNQLLELDHQKRGGARYTALDKWTNQLNSLNQAIVSKLA.

A PCI domain is found at 254–416 (AHTDFFEAFK…QLLELDHQKR (163 aa)).

The protein belongs to the CSN2 family. Component of the CSN complex, probably composed of cops1, cops2, cops3, cops4, cops5, cops6, cops7, cops8 and cops9.

It localises to the cytoplasm. It is found in the nucleus. Functionally, essential component of the COP9 signalosome complex (CSN), a complex involved in various cellular and developmental processes. The CSN complex is an essential regulator of the ubiquitin (Ubl) conjugation pathway by mediating the deneddylation of the cullin subunits of E3 ligase complexes, leading to modify the Ubl ligase activity. This chain is COP9 signalosome complex subunit 2 (cops2), found in Danio rerio (Zebrafish).